Consider the following 133-residue polypeptide: Small ribosomal subunit protein uS8 (133 aa).

The protein belongs to the universal ribosomal protein uS8 family. Part of the 30S ribosomal subunit.

One of the primary rRNA binding proteins, it binds directly to 16S rRNA central domain where it helps coordinate assembly of the platform of the 30S subunit. This chain is Small ribosomal subunit protein uS8, found in Ignicoccus hospitalis (strain KIN4/I / DSM 18386 / JCM 14125).